Reading from the N-terminus, the 234-residue chain is MSTPFYVSPEQIMKDRAEFARKGIARGRSNVVLQYADGILFVAENTSKALHKISEVYDRIAFAAVGRYNEFENLRVAGVRLADLTGYTYDRRDVTGRTIANAYAQTLGAIFSGATEKPYEVEIVVAEVGDTPDGDSMYRLTYDGSVAEEHGYVAMGGQAEQITAQLKDRYVENLPLGEALRLAVDVLSRASDGGEPRTLTPDQLEVAALDRTRGRRAFRRFIGAQLQELLRPTS.

The protein belongs to the peptidase T1A family. The 20S proteasome core is composed of 14 alpha and 14 beta subunits that assemble into four stacked heptameric rings, resulting in a barrel-shaped structure. The two inner rings, each composed of seven catalytic beta subunits, are sandwiched by two outer rings, each composed of seven alpha subunits. The catalytic chamber with the active sites is on the inside of the barrel. Has a gated structure, the ends of the cylinder being occluded by the N-termini of the alpha-subunits. Is capped by the proteasome-associated ATPase, ARC.

Its subcellular location is the cytoplasm. It functions in the pathway protein degradation; proteasomal Pup-dependent pathway. The formation of the proteasomal ATPase ARC-20S proteasome complex, likely via the docking of the C-termini of ARC into the intersubunit pockets in the alpha-rings, may trigger opening of the gate for substrate entry. Interconversion between the open-gate and close-gate conformations leads to a dynamic regulation of the 20S proteasome proteolysis activity. Its function is as follows. Component of the proteasome core, a large protease complex with broad specificity involved in protein degradation. In Acidothermus cellulolyticus (strain ATCC 43068 / DSM 8971 / 11B), this protein is Proteasome subunit alpha.